The following is a 273-amino-acid chain: NH(3)-dependent NAD(+) synthetase (273 aa).

47-54 lines the ATP pocket; sequence GISGGQDS. Mg(2+) is bound at residue Asp-53. Arg-139 serves as a coordination point for deamido-NAD(+). Residue Thr-159 participates in ATP binding. Glu-164 serves as a coordination point for Mg(2+). Deamido-NAD(+) contacts are provided by Lys-172 and Asp-179. ATP is bound by residues Lys-188 and Thr-210. 259-260 is a deamido-NAD(+) binding site; sequence HK.

Belongs to the NAD synthetase family. In terms of assembly, homodimer.

It catalyses the reaction deamido-NAD(+) + NH4(+) + ATP = AMP + diphosphate + NAD(+) + H(+). It participates in cofactor biosynthesis; NAD(+) biosynthesis; NAD(+) from deamido-NAD(+) (ammonia route): step 1/1. Its function is as follows. Catalyzes the ATP-dependent amidation of deamido-NAD to form NAD. Uses ammonia as a nitrogen source. The polypeptide is NH(3)-dependent NAD(+) synthetase (Staphylococcus aureus (strain bovine RF122 / ET3-1)).